Reading from the N-terminus, the 268-residue chain is Homeobox protein Hox-C4a (268 aa).

The tract at residues 70 to 129 is disordered; the sequence is PEPDTQRGHGLPHAGHLLGKGQSASCEPPPLPLSPATPSAASSACNQATPEHPNSSASAK. 2 stretches are compositionally biased toward low complexity: residues 77-95 and 105-114; these read GHGL…SASC and ATPSAASSAC. Residues 115–128 show a composition bias toward polar residues; it reads NQATPEHPNSSASA. An Antp-type hexapeptide motif is present at residues 133 to 138; sequence VYPWMK. Residues 154 to 213 constitute a DNA-binding region (homeobox); the sequence is PKRSRTAYTRQQVLELEKEFHYNRYLTRRRRIEIAHSLVLSERQIKIWFQNRRMKWKKDH. The tract at residues 212 to 268 is disordered; that stretch reads DHRLPNTKVRSSSSTGISSGSNTSSAAGVVAAASTTNTMSASEDLSGTERGEDITRL. Positions 222–253 are enriched in low complexity; that stretch reads SSSSTGISSGSNTSSAAGVVAAASTTNTMSAS. Residues 258–268 are compositionally biased toward basic and acidic residues; sequence GTERGEDITRL.

The protein belongs to the Antp homeobox family. Deformed subfamily.

It localises to the nucleus. Functionally, sequence-specific transcription factor which is part of a developmental regulatory system that provides cells with specific positional identities on the anterior-posterior axis. The protein is Homeobox protein Hox-C4a (hoxc4a) of Danio rerio (Zebrafish).